Consider the following 361-residue polypeptide: Epoxyqueuosine reductase (361 aa).

Asp-147 acts as the Proton donor in catalysis. Residues 193–222 (VDPAMDSEHCGRCSACLDICPTAAFVGPYR) enclose the 4Fe-4S ferredoxin-type domain. 8 residues coordinate [4Fe-4S] cluster: Cys-202, Cys-205, Cys-208, Cys-212, Cys-228, Cys-255, Cys-258, and Cys-262.

Belongs to the QueG family. Monomer. Cob(II)alamin serves as cofactor. It depends on [4Fe-4S] cluster as a cofactor.

It is found in the cytoplasm. It carries out the reaction epoxyqueuosine(34) in tRNA + AH2 = queuosine(34) in tRNA + A + H2O. The protein operates within tRNA modification; tRNA-queuosine biosynthesis. In terms of biological role, catalyzes the conversion of epoxyqueuosine (oQ) to queuosine (Q), which is a hypermodified base found in the wobble positions of tRNA(Asp), tRNA(Asn), tRNA(His) and tRNA(Tyr). The sequence is that of Epoxyqueuosine reductase from Pseudomonas aeruginosa (strain ATCC 15692 / DSM 22644 / CIP 104116 / JCM 14847 / LMG 12228 / 1C / PRS 101 / PAO1).